The chain runs to 225 residues: MHTTQKDTTYTKIFVGGLPYHTTDSSLRKYFEVFGDIEEAVVITDRQTGKSRGYGFVTMADRAAAERACKDPNPIIDGRKANVNLAYLGAKPRIMQPGFAFGVQQIHPALIQRPFGIPAHYVYPQAYVQPGVVIPHVQPTAATSTSPYIDYTSAAYAQYSAAAAAAAYDQYPYAASPAATGYVTAAGYGYAVPQPLTAAAPGSAAAAAAAFGQYQPQQLQADRMQ.

In terms of domain architecture, RRM spans 11–88 (TKIFVGGLPY…RKANVNLAYL (78 aa)).

Its subcellular location is the nucleus. The protein resides in the cytoplasm. Its function is as follows. Multifunctional RNA-binding protein involved in the regulation of pre-mRNA splicing, mRNA stability and mRNA translation important for cell fate decision and differentiation. Plays a major role in pre-mRNA alternative splicing regulation. Mediates preferentially muscle-specific exon inclusion in numerous mRNAs important for striated cardiac and skeletal muscle cell differentiation. Binds to intronic splicing enhancer (ISE) composed of stretches of GU-rich motifs localized in flanking intron of exon that will be included by alternative splicing. Involved in embryonic stem cell (ESC) transition to cardiac cell differentiation by promoting pre-mRNA alternative splicing events of several pluripotency and/or differentiation genes. Plays a role in the regulation of mRNA stability and mRNA translation to which it is bound. Involved in myogenic differentiation by regulating myog levels. Binds to a huge amount of mRNAs. Required for embryonic heart development, sarcomer and M-band formation in striated muscles. The polypeptide is RNA-binding protein 24-A (rbm24-a) (Xenopus laevis (African clawed frog)).